A 419-amino-acid polypeptide reads, in one-letter code: Odorant receptor 56a (419 aa).

The Cytoplasmic portion of the chain corresponds to 1 to 41 (MFKVKDLLLSPTTFEDPIFGTHLRYFQWYGYVASKDQNRPL). A helical transmembrane segment spans residues 42–62 (LSLIRCTILTASIWLSCALML). Residues 63–76 (ARVFRGYENLNDGA) lie on the Extracellular side of the membrane. A helical membrane pass occupies residues 77–97 (TSYATAVQYFAVSIAMFNAYV). Residues 98 to 137 (QRDKVISLLRVAHSDIQNLMHEADNREMELLVATQAYTRT) are Cytoplasmic-facing. The chain crosses the membrane as a helical span at residues 138–158 (ITLLIWIPSVIAGLMAYSDCI). Residues 159–196 (YRSLFLPKSVFNVPAVRRGEEHPILLFQLFPFGELCDN) are Extracellular-facing. The chain crosses the membrane as a helical span at residues 197–217 (FVVGYLGPWYALGLGITAIPL). Over 218-292 (WHTFITCLMK…FVQELQYLIC (75 aa)) the chain is Cytoplasmic. Residues 293–313 (VPVMADFIIFSVLICFLFFAL) form a helical membrane-spanning segment. Residues 314–323 (TVGVPSKMDY) are Extracellular-facing. The chain crosses the membrane as a helical span at residues 324-344 (FFMFIYLFVMAGILWIYHWHA). Topologically, residues 345–389 (TLIVECHDELSLAYFSCGWYNFEMPLQKMLVFMMMHAQRPMKMRA) are cytoplasmic. A helical membrane pass occupies residues 390–410 (LLVDLNLRTFIDIGRGAYSYF). The Extracellular segment spans residues 411 to 419 (NLLRSSHLY).

This sequence belongs to the insect chemoreceptor superfamily. Heteromeric odorant receptor channel (TC 1.A.69) family. Or30a subfamily. As to quaternary structure, interacts with Orco. Complexes exist early in the endomembrane system in olfactory sensory neurons (OSNs), coupling these complexes to the conserved ciliary trafficking pathway. Expressed in olfactory sensory neurons in the antenna.

The protein localises to the cell membrane. Functionally, odorant receptor which mediates acceptance or avoidance behavior, depending on its substrates. The odorant receptor repertoire encodes a large collection of odor stimuli that vary widely in identity, intensity, and duration. May form a complex with Orco to form odorant-sensing units, providing sensitive and prolonged odorant signaling and calcium permeability. Specific receptor for geosmin, a microbial odorant that constitutes an ecologically relevant stimulus that alerts flies to the presence of harmful microbes and induces avoidance behavior. In Drosophila melanogaster (Fruit fly), this protein is Odorant receptor 56a (Or56a).